A 512-amino-acid polypeptide reads, in one-letter code: Maturase K (512 aa).

It belongs to the intron maturase 2 family. MatK subfamily.

The protein resides in the plastid. The protein localises to the chloroplast. Its function is as follows. Usually encoded in the trnK tRNA gene intron. Probably assists in splicing its own and other chloroplast group II introns. The polypeptide is Maturase K (Amorphophallus abyssinicus (Black arum)).